A 477-amino-acid chain; its full sequence is Prolyl tri/tetrapeptidyl aminopeptidase (477 aa).

The N-terminal stretch at 1–27 (MRKALRSLLAASMLIGAIGAGSATAEA) is a signal peptide. The propeptide occupies 28–33 (ASITAP). The segment at 448–477 (QKDEKAAKPLAPFDAKLDRVKNDKQSALRP) is disordered. Positions 462–477 (AKLDRVKNDKQSALRP) are enriched in basic and acidic residues.

It belongs to the peptidase S37 family.

Its subcellular location is the secreted. It is found in the cell surface. With respect to regulation, completely inhibited by the serine protease inhibitor phenylmethylsulfonyl fluoride. Partially inhibited by the serine protease inhibitor Pefabloc. Not inhibited by cysteine proteinase-specific or metalloproteinase-specific inhibitors. Not inhibited by prolinal or its derivatives. EDTA and EGTA both partially inhibit this enzyme. EDTA has no effect on activity. Has proline-specific tripeptidyl aminopeptidase and tetrapeptidyl aminopeptidase activity. Activity is highest against tripeptides containing an Ala-Pro motif. Involved in the final processing of transglutaminase, by removing either the tetrapeptide Phe-Arg-Ala-Pro left after TAMEP or SAM-P45 hydrolysis, or the tripeptide Arg-Ala-Pro left after SGMP II hydrolysis in a single step. The sequence is that of Prolyl tri/tetrapeptidyl aminopeptidase (ptp) from Streptomyces mobaraensis (Streptoverticillium mobaraense).